A 280-amino-acid polypeptide reads, in one-letter code: HCLS1-associated protein X-1 (280 aa).

At S2 the chain carries N-acetylserine. A required for localization in mitochondria region spans residues 2–45 (SVFDLFRGFFGFPGPRSHRDPFFGGMTRDDDDDDDDDDEAEEDR). 2 disordered regions span residues 12 to 70 (GFPG…SFSP) and 100 to 263 (TLPS…SALD). Acidic residues predominate over residues 30 to 43 (DDDDDDDDDDEAEE). An involved in HCLS1 binding region spans residues 115-280 (TPGERLREGQ…LLLGRWFRSR (166 aa)). Basic and acidic residues-rich tracts occupy residues 116–125 (PGERLREGQT) and 134–154 (PDSH…KPES). An involved in CASP9 binding region spans residues 176–207 (VSPHSRAKEDKDLDSQVSQEGLGPLLQPQPKS). Residues 177-248 (SPHSRAKEDK…TTVTHQEAHD (72 aa)) form an involved in GNA13 binding region. A required for localization in sarcoplasmic reticulum region spans residues 184–280 (EDKDLDSQVS…LLLGRWFRSR (97 aa)). The interval 185 to 280 (DKDLDSQVSQ…LLLGRWFRSR (96 aa)) is involved in PKD2 binding. Phosphoserine occurs at positions 190 and 193. The tract at residues 204 to 226 (QPKSYFKSISVTKITKPDGTVEE) is involved in PLN binding. The segment at 204 to 246 (QPKSYFKSISVTKITKPDGTVEERRTVVDSEGRRETTVTHQEA) is involved in ATP2A2 binding. The mediates interaction with UCP3 stretch occupies residues 211-280 (SISVTKITKP…LLLGRWFRSR (70 aa)). Positions 218-256 (TKPDGTVEERRTVVDSEGRRETTVTHQEAHDSSRSDPDS) are enriched in basic and acidic residues. The required for ITGB6 binding stretch occupies residues 271 to 280 (LLLGRWFRSR).

This sequence belongs to the HAX1 family. In terms of assembly, interacts with ABCB1, ABCB4 and ABCB11. Directly associates with HCLS1/HS1, through binding to its N-terminal region. Interacts with CTTN. Interacts with PKD2. Interacts with GNA13. Interacts with CASP9. Interacts with ITGB6. Interacts with PLN and ATP2A2; these interactions are inhibited by calcium. Interacts with GRB7. Interacts (via C-terminus) with XIAP/BIRC4 (via BIR 2 domain and BIR 3 domain) and this interaction blocks ubiquitination of XIAP/BIRC4. Interacts with TPC2. Interacts with KCNC3. Interacts with XPO1. Interacts with RNF217. Interacts with UCP3; the interaction is direct and calcium-dependent. Interacts with MAPRE2; this interaction regulates cell migration in keratinocytes. As to expression, ubiquitous, with highest levels in kidney and liver (at protein level).

It localises to the mitochondrion matrix. Its subcellular location is the endoplasmic reticulum. The protein resides in the nucleus membrane. It is found in the cytoplasmic vesicle. The protein localises to the cytoplasm. It localises to the cell cortex. Its subcellular location is the cell membrane. The protein resides in the sarcoplasmic reticulum. It is found in the P-body. The protein localises to the nucleus. Functionally, recruits the Arp2/3 complex to the cell cortex and regulates reorganization of the cortical actin cytoskeleton via its interaction with KCNC3 and the Arp2/3 complex. Slows down the rate of inactivation of KCNC3 channels. Promotes GNA13-mediated cell migration. Involved in the clathrin-mediated endocytosis pathway. May be involved in internalization of ABC transporters such as ABCB11. May inhibit CASP9 and CASP3. Promotes cell survival. May regulate intracellular calcium pools. The chain is HCLS1-associated protein X-1 (Hax1) from Mus musculus (Mouse).